Here is a 55-residue protein sequence, read N- to C-terminus: Large ribosomal subunit protein bL33B (55 aa).

Belongs to the bacterial ribosomal protein bL33 family.

The polypeptide is Large ribosomal subunit protein bL33B (Mycolicibacterium paratuberculosis (strain ATCC BAA-968 / K-10) (Mycobacterium paratuberculosis)).